Consider the following 1367-residue polypeptide: Histone acetyltransferase HAC2 (1367 aa).

Residues T110–S151 are disordered. Residues S111–S127 are compositionally biased toward low complexity. Residues T130–K144 are compositionally biased toward basic and acidic residues. 12 consecutive repeat copies span residues K188–K200, K223–K235, K251–K263, K286–K298, K314–K326, K349–K361, K377–K389, K418–K430, D432–K444, K459–K471, D473–K485, and K500–K512. Residues K188–K512 form a 12 X 13 AA approximate repeats region. A PHD-type zinc finger spans residues H688–E765. A CBP/p300-type HAT domain is found at D780–K1213. Acetyl-CoA-binding positions include L903 to S905, R922 to T923, and W978. The ZZ-type 1; degenerate zinc-finger motif lies at E1094–V1157. Residues C1099, C1102, C1123, C1126, C1225, C1228, C1240, C1243, C1249, C1252, H1261, and H1263 each coordinate Zn(2+). The ZZ-type 2 zinc-finger motif lies at S1220–R1273. The TAZ-type zinc-finger motif lies at A1274–R1359.

As to expression, rosette leaves, stems and flowers.

The protein resides in the nucleus. It catalyses the reaction L-lysyl-[protein] + acetyl-CoA = N(6)-acetyl-L-lysyl-[protein] + CoA + H(+). Its function is as follows. Acetyltransferase enzyme. Acetylates histones, giving a specific tag for transcriptional activation. No acetyltransferase activity found in vitro. In Arabidopsis thaliana (Mouse-ear cress), this protein is Histone acetyltransferase HAC2 (HAC2).